The sequence spans 604 residues: Threonine--tRNA ligase (604 aa).

Positions 209 to 500 are catalytic; sequence DHRKLGQEMG…LTEHFGGEFP (292 aa). 3 residues coordinate Zn(2+): cysteine 301, histidine 352, and histidine 477.

It belongs to the class-II aminoacyl-tRNA synthetase family. Homodimer. The cofactor is Zn(2+).

The protein localises to the cytoplasm. The enzyme catalyses tRNA(Thr) + L-threonine + ATP = L-threonyl-tRNA(Thr) + AMP + diphosphate + H(+). Functionally, catalyzes the attachment of threonine to tRNA(Thr) in a two-step reaction: L-threonine is first activated by ATP to form Thr-AMP and then transferred to the acceptor end of tRNA(Thr). Also edits incorrectly charged L-seryl-tRNA(Thr). The protein is Threonine--tRNA ligase of Helicobacter hepaticus (strain ATCC 51449 / 3B1).